An 81-amino-acid chain; its full sequence is Prophage excisionase-like protein (81 aa).

To lambdoid phages excisionases.

In Escherichia coli (strain K12), this protein is Prophage excisionase-like protein (xisE).